The following is a 49-amino-acid chain: Photosystem I reaction center subunit IX (49 aa).

The chain crosses the membrane as a helical span at residues 14 to 34 (FISTAPVAATIWLTITAGILI).

This sequence belongs to the PsaJ family.

The protein resides in the cellular thylakoid membrane. Functionally, may help in the organization of the PsaE and PsaF subunits. In Nostoc punctiforme (strain ATCC 29133 / PCC 73102), this protein is Photosystem I reaction center subunit IX.